Consider the following 891-residue polypeptide: DNA mismatch repair protein MutS (891 aa).

Residue Gly646–Ser653 coordinates ATP.

This sequence belongs to the DNA mismatch repair MutS family.

In terms of biological role, this protein is involved in the repair of mismatches in DNA. It is possible that it carries out the mismatch recognition step. This protein has a weak ATPase activity. The sequence is that of DNA mismatch repair protein MutS from Rickettsia typhi (strain ATCC VR-144 / Wilmington).